The chain runs to 157 residues: Ribonuclease H (157 aa).

Positions 4–146 (KRTEITIYTD…CDKLAVKASQ (143 aa)) constitute an RNase H type-1 domain. Positions 13, 51, 73, and 138 each coordinate Mg(2+).

It belongs to the RNase H family. As to quaternary structure, monomer. Requires Mg(2+) as cofactor.

The protein resides in the cytoplasm. It carries out the reaction Endonucleolytic cleavage to 5'-phosphomonoester.. Endonuclease that specifically degrades the RNA of RNA-DNA hybrids. In Trichodesmium erythraeum (strain IMS101), this protein is Ribonuclease H.